Here is a 443-residue protein sequence, read N- to C-terminus: Trimethylamine monooxygenase (443 aa).

D37, Q39, L45, and W46 together coordinate FAD. Residues W70 and N72 each coordinate NADP(+). Residues N72 and V125 each contribute to the FAD site. The NADP(+) site is built by Y170, S202, S203, S205, and R226. FAD contacts are provided by Q315 and T318. R409 lines the NADP(+) pocket.

It belongs to the FMO family. FAD serves as cofactor.

It carries out the reaction trimethylamine + NADPH + O2 = trimethylamine N-oxide + NADP(+) + H2O. In terms of biological role, catalyzes the oxidation of trimethylamine (TMA) to produce trimethylamine N-oxide (TMAO). In vitro, has a broad substrate specificity, oxidizing many nitrogen- and sulfur-containing compounds, including dimethylamine (DMA), dimethylsulfide (DMS) and dimethylsulfoxide (DMSO). The sequence is that of Trimethylamine monooxygenase from Pelagibacter ubique (strain HTCC1002).